The primary structure comprises 98 residues: HIG1 domain family member 1B (98 aa).

Residues 1–28 (MSANKGWWVPPEGEDNLSKKFLRKTRES) lie on the Cytoplasmic side of the membrane. Residues 1–94 (MSANKGWWVP…YRDYIKRVSE (94 aa)) form the HIG1 domain. Residues 29–46 (PLVPIGVAGCLVIAAYRI) form a helical membrane-spanning segment. Residues 47–60 (YRLKARGSTKLSIH) lie on the Extracellular side of the membrane. Residues 61 to 83 (LIHTRVAAQACAVGAIMLGAMYT) form a helical membrane-spanning segment. Topologically, residues 84–98 (MYRDYIKRVSEDAEK) are cytoplasmic.

The protein localises to the membrane. This is HIG1 domain family member 1B (Higd1b) from Mus musculus (Mouse).